We begin with the raw amino-acid sequence, 591 residues long: Frizzled and smoothened-like protein F (591 aa).

The first 17 residues, 1-17 (MKILIIFIIFIISYISG), serve as a signal peptide directing secretion. At 18–244 (FEIPKGFGIG…KWDQLLTMSK (227 aa)) the chain is on the extracellular side. The FZ domain occupies 30–177 (IPDAECLNYI…GTFAVPCSDP (148 aa)). Disulfide bonds link C35/C105, C48/C98, and C123/C174. N-linked (GlcNAc...) asparagine glycosylation is found at N167, N187, N202, and N230. Residues 245–265 (ILSTISFILSLYNVLTFGIIN) form a helical membrane-spanning segment. Residues 266 to 275 (KKVSDPHKCT) lie on the Cytoplasmic side of the membrane. Residues 276 to 296 (CFFSGSIALVNLCDIITYGIG) traverse the membrane as a helical segment. At 297–321 (YEELLCPEPGRSAKQQLDPVCGLTG) the chain is on the extracellular side. The chain crosses the membrane as a helical span at residues 322-342 (AFFHLGITYCVLWSMTMGLVL). The Cytoplasmic portion of the chain corresponds to 343–353 (YCSVKRQKWFK). A helical membrane pass occupies residues 354–374 (FNYFLIGNTTFTITTVVIAAA). Over 375–397 (TSKFEAGLGSIECWIRDRWYAIS) the chain is Extracellular. A helical membrane pass occupies residues 398–418 (LFWIPCGIALLIGSFCIIAVI). Over 419 to 442 (HEVYKTSKKSISNRNDLLQRELKP) the chain is Cytoplasmic. A helical transmembrane segment spans residues 443–463 (LLIVIFISGSFLYLFIFFFDI). The Extracellular segment spans residues 464–495 (ERKFGGYRSAVEDYVLCLLNGSQEECFTTGPS). N483 carries N-linked (GlcNAc...) asparagine glycosylation. The chain crosses the membrane as a helical span at residues 496–516 (YVPYFLFYLVIRWFGIIFFLF). Residues 517-591 (YGTSNIARKI…AVELESIKIN (75 aa)) are Cytoplasmic-facing. Low complexity predominate over residues 538–571 (SSISPKSTPKSSPKNSDSKINSNSTNNNNMILND). Residues 538 to 573 (SSISPKSTPKSSPKNSDSKINSNSTNNNNMILNDNN) are disordered.

The protein belongs to the G-protein coupled receptor Fz/Smo family.

The protein localises to the membrane. The chain is Frizzled and smoothened-like protein F (fslF) from Dictyostelium discoideum (Social amoeba).